The following is a 326-amino-acid chain: Heterodimeric geranylgeranyl pyrophosphate synthase small subunit, chloroplastic (326 aa).

Residues 1 to 33 (MLFSGSAIPLSSFCSLPEKPHTLPMKLSPAAIR) constitute a chloroplast transit peptide. Positions 88 and 120 each coordinate isopentenyl diphosphate. Mg(2+) contacts are provided by D127 and D133. Dimethylallyl diphosphate is bound at residue R138. R139 lines the isopentenyl diphosphate pocket. Residues K220 and Q258 each coordinate dimethylallyl diphosphate. The stretch at 274–301 (GAEKGMMEMAEELKEKAKKELQVFDNKY) forms a coiled coil.

It belongs to the FPP/GGPP synthase family. In terms of assembly, part of a heterodimeric geranyl(geranyl)diphosphate synthase. Interacts with GGPPS1 or GGPPS2, but not with GGPPS9. Interacts with LIL3.1 and LIL3.2. Mg(2+) serves as cofactor. As to expression, expressed ubiquitously.

It localises to the plastid. Its subcellular location is the chloroplast thylakoid membrane. Heterodimeric geranyl(geranyl)-diphosphate (GPP) synthase small subunit. The small subunit alone is inactive in vitro while the large subunit GGPPS1 catalyzes mainly the production of geranygeranyl-diphosphate in vitro. Upon association of the two subunits, the product profile changes and the production of gerany-diphosphate is strongly increased. The protein is Heterodimeric geranylgeranyl pyrophosphate synthase small subunit, chloroplastic (GGR) of Arabidopsis thaliana (Mouse-ear cress).